The sequence spans 277 residues: Pantothenate synthetase (277 aa).

Position 28–35 (28–35) interacts with ATP; that stretch reads MGALHSGH. The active-site Proton donor is H35. Q59 serves as a coordination point for (R)-pantoate. Q59 lines the beta-alanine pocket. ATP contacts are provided by residues 145–148, V174, and 182–185; these read GEKD and LSSR.

It belongs to the pantothenate synthetase family. In terms of assembly, homodimer.

It is found in the cytoplasm. It carries out the reaction (R)-pantoate + beta-alanine + ATP = (R)-pantothenate + AMP + diphosphate + H(+). It participates in cofactor biosynthesis; (R)-pantothenate biosynthesis; (R)-pantothenate from (R)-pantoate and beta-alanine: step 1/1. Functionally, catalyzes the condensation of pantoate with beta-alanine in an ATP-dependent reaction via a pantoyl-adenylate intermediate. The sequence is that of Pantothenate synthetase from Anaplasma marginale (strain St. Maries).